The primary structure comprises 305 residues: Succinate--CoA ligase [ADP-forming] subunit alpha (305 aa).

Residues 17–20 (TGKE), lysine 43, and 96–98 (ITE) contribute to the CoA site. A substrate-binding site is contributed by tyrosine 161. Catalysis depends on histidine 249, which acts as the Tele-phosphohistidine intermediate.

The protein belongs to the succinate/malate CoA ligase alpha subunit family. As to quaternary structure, heterotetramer of two alpha and two beta subunits.

The enzyme catalyses succinate + ATP + CoA = succinyl-CoA + ADP + phosphate. It catalyses the reaction GTP + succinate + CoA = succinyl-CoA + GDP + phosphate. It functions in the pathway carbohydrate metabolism; tricarboxylic acid cycle; succinate from succinyl-CoA (ligase route): step 1/1. Functionally, succinyl-CoA synthetase functions in the citric acid cycle (TCA), coupling the hydrolysis of succinyl-CoA to the synthesis of either ATP or GTP and thus represents the only step of substrate-level phosphorylation in the TCA. The alpha subunit of the enzyme binds the substrates coenzyme A and phosphate, while succinate binding and nucleotide specificity is provided by the beta subunit. The chain is Succinate--CoA ligase [ADP-forming] subunit alpha from Aquifex aeolicus (strain VF5).